We begin with the raw amino-acid sequence, 249 residues long: Pyridoxine 5'-phosphate synthase (249 aa).

Residue N10 participates in 3-amino-2-oxopropyl phosphate binding. Residue 12 to 13 (DH) participates in 1-deoxy-D-xylulose 5-phosphate binding. R21 contributes to the 3-amino-2-oxopropyl phosphate binding site. The active-site Proton acceptor is the H46. R48 and H53 together coordinate 1-deoxy-D-xylulose 5-phosphate. Catalysis depends on E73, which acts as the Proton acceptor. Residue T103 participates in 1-deoxy-D-xylulose 5-phosphate binding. H194 serves as the catalytic Proton donor. Residues G195 and 216–217 (GH) contribute to the 3-amino-2-oxopropyl phosphate site.

It belongs to the PNP synthase family. In terms of assembly, homooctamer; tetramer of dimers.

It localises to the cytoplasm. The catalysed reaction is 3-amino-2-oxopropyl phosphate + 1-deoxy-D-xylulose 5-phosphate = pyridoxine 5'-phosphate + phosphate + 2 H2O + H(+). Its pathway is cofactor biosynthesis; pyridoxine 5'-phosphate biosynthesis; pyridoxine 5'-phosphate from D-erythrose 4-phosphate: step 5/5. Its function is as follows. Catalyzes the complicated ring closure reaction between the two acyclic compounds 1-deoxy-D-xylulose-5-phosphate (DXP) and 3-amino-2-oxopropyl phosphate (1-amino-acetone-3-phosphate or AAP) to form pyridoxine 5'-phosphate (PNP) and inorganic phosphate. The protein is Pyridoxine 5'-phosphate synthase of Rhodospirillum rubrum (strain ATCC 11170 / ATH 1.1.1 / DSM 467 / LMG 4362 / NCIMB 8255 / S1).